Consider the following 575-residue polypeptide: Septation ring formation regulator EzrA (575 aa).

Over methionine 1–tyrosine 8 the chain is Extracellular. A helical transmembrane segment spans residues leucine 9–leucine 27. The Cytoplasmic segment spans residues arginine 28 to phenylalanine 575. Coiled-coil stretches lie at residues leucine 105 to leucine 191, leucine 265 to isoleucine 301, valine 354 to aspartate 416, and threonine 456 to alanine 526.

This sequence belongs to the EzrA family.

It localises to the cell membrane. Negative regulator of FtsZ ring formation; modulates the frequency and position of FtsZ ring formation. Inhibits FtsZ ring formation at polar sites. Interacts either with FtsZ or with one of its binding partners to promote depolymerization. The sequence is that of Septation ring formation regulator EzrA from Streptococcus pneumoniae serotype 4 (strain ATCC BAA-334 / TIGR4).